Reading from the N-terminus, the 476-residue chain is Probable periplasmic serine endoprotease DegP-like (476 aa).

Residues 1–27 (MSIPRLKSYFTILATVLVLGQAVSAQA) form the signal peptide. Active-site charge relay system residues include His-116, Asp-146, and Ser-219. Substrate contacts are provided by residues 217-219 (GNS) and 274-278 (LGVVI). PDZ domains follow at residues 263–354 (LKTG…IRDG) and 360–465 (ELTV…LRQG).

It belongs to the peptidase S1C family.

Its subcellular location is the periplasm. It carries out the reaction Acts on substrates that are at least partially unfolded. The cleavage site P1 residue is normally between a pair of hydrophobic residues, such as Val-|-Val.. Functionally, might be efficient in the degradation of transiently denatured and unfolded proteins which accumulate in the periplasm following stress conditions. In Pseudomonas fluorescens (strain ATCC BAA-477 / NRRL B-23932 / Pf-5), this protein is Probable periplasmic serine endoprotease DegP-like (mucD).